The primary structure comprises 710 residues: Low-temperature-induced 78 kDa protein (710 aa).

3 disordered regions span residues 1–198 (MDQT…LDGQ), 225–269 (YQSK…RDLS), and 305–507 (GFGD…STYT). A compositionally biased stretch (basic and acidic residues) spans 14-25 (QHPEEVEHHENG). The segment covering 29–41 (MFRKVKARAKKFK) has biased composition (basic residues). Over residues 49–58 (QSNEHEQDHD) the composition is skewed to basic and acidic residues. The span at 59–73 (LVEEDDDDDELEPEV) shows a compositional bias: acidic residues. A compositionally biased stretch (basic and acidic residues) spans 138-168 (SDKEEKRDVPIHHPLSELSDREESRETHHES). The span at 169–187 (LNTPVSLLSGTEDVTSTFA) shows a compositional bias: polar residues. Tandem repeats lie at residues 303–316 (PVGF…ELEK), 317–331 (DFPT…KTET), 336–350 (NSPS…KTES), 357–370 (PMGF…ELEK), and 398–412 (NFPV…KNES). The segment at 303-370 (PVGFGDESGA…GSESGAELEK (68 aa)) is 2 X 14 AA repeats of P-[MV]-G-F-G-[DS]-E-S-G-A-E-L-E-K. Composition is skewed to basic and acidic residues over residues 313 to 331 (ELEK…KTET), 340 to 352 (RSHE…ESGN), 367 to 380 (ELEK…DSGR), 402 to 418 (RSHE…DKDV), 442 to 466 (EDKF…KTET), and 475 to 487 (SHPK…KESR). Residues 317–412 (DFPTRSHDFD…SHELDLKNES (96 aa)) form a 3 X 15 AA repeats of [DN]-[FS]-P-[STV]-R-S-H-[DE]-[FL]-D-[LM]-K-[NT]-E-[ST] region. 3 repeat units span residues 510–514 (FASML), 532–536 (VDEKL), and 550–554 (VTTKL). Residues 510 to 600 (FASMLGYSGE…AFSDMVAEKL (91 aa)) are 5 X 5 AA repeats of [FV]-[ADT]-[EST]-[KM]-L. Residues 537-577 (TPVNEKDQETESAVTTKLPISGGGSGVEEQRGEDKSVSGRD) are disordered. A compositionally biased stretch (basic and acidic residues) spans 564-577 (EEQRGEDKSVSGRD). Tandem repeats lie at residues 579–583 (VAEKL) and 596–600 (VAEKL). The disordered stretch occupies residues 601–710 (QIGGEEEKKE…STVVPVQKEL (110 aa)). The segment covering 605-626 (EEEKKETTTKEVEKISTEKAAS) has biased composition (basic and acidic residues). Residue Ser-626 is modified to Phosphoserine. The span at 638 to 654 (GGGGMVGRIKGWFGGGA) shows a compositional bias: gly residues. Tandem repeats lie at residues 648–670 (GWFG…EEAP) and 674–696 (GWFG…EESP). Residues 648–696 (GWFGGGATDEVKPESPHSVEEAPKSSGWFGGGATEEVKPKSPHSVEESP) are 2 X 23 AA repeats. Basic and acidic residues-rich tracts occupy residues 656-670 (DEVK…EEAP) and 682-693 (EEVKPKSPHSVE).

The protein belongs to the LTI78/LTI65 family. In terms of tissue distribution, accumulates rapidly in leaves, stems, roots, flower petals, filaments, and sepals during cold-acclimation.

It is found in the cytoplasm. Involved in responses to abiotic stresses. Regulates probably root elongation in cold conditions. The chain is Low-temperature-induced 78 kDa protein from Arabidopsis thaliana (Mouse-ear cress).